The primary structure comprises 200 residues: NADH-quinone oxidoreductase subunit C (200 aa).

The protein belongs to the complex I 30 kDa subunit family. In terms of assembly, NDH-1 is composed of 14 different subunits. Subunits NuoB, C, D, E, F, and G constitute the peripheral sector of the complex.

It is found in the cell inner membrane. The enzyme catalyses a quinone + NADH + 5 H(+)(in) = a quinol + NAD(+) + 4 H(+)(out). In terms of biological role, NDH-1 shuttles electrons from NADH, via FMN and iron-sulfur (Fe-S) centers, to quinones in the respiratory chain. The immediate electron acceptor for the enzyme in this species is believed to be ubiquinone. Couples the redox reaction to proton translocation (for every two electrons transferred, four hydrogen ions are translocated across the cytoplasmic membrane), and thus conserves the redox energy in a proton gradient. The sequence is that of NADH-quinone oxidoreductase subunit C from Rhizobium johnstonii (strain DSM 114642 / LMG 32736 / 3841) (Rhizobium leguminosarum bv. viciae).